We begin with the raw amino-acid sequence, 76 residues long: Small ribosomal subunit protein bS18 (76 aa).

It belongs to the bacterial ribosomal protein bS18 family. Part of the 30S ribosomal subunit. Forms a tight heterodimer with protein bS6.

Its function is as follows. Binds as a heterodimer with protein bS6 to the central domain of the 16S rRNA, where it helps stabilize the platform of the 30S subunit. The chain is Small ribosomal subunit protein bS18 from Mesoplasma florum (strain ATCC 33453 / NBRC 100688 / NCTC 11704 / L1) (Acholeplasma florum).